The following is a 138-amino-acid chain: Large ribosomal subunit protein uL14m (138 aa).

The protein belongs to the universal ribosomal protein uL14 family. As to quaternary structure, component of the mitochondrial large ribosomal subunit (mt-LSU). Mature yeast 74S mitochondrial ribosomes consist of a small (37S) and a large (54S) subunit. The 37S small subunit contains a 15S ribosomal RNA (15S mt-rRNA) and 34 different proteins. The 54S large subunit contains a 21S rRNA (21S mt-rRNA) and 46 different proteins.

It localises to the mitochondrion. In terms of biological role, component of the mitochondrial ribosome (mitoribosome), a dedicated translation machinery responsible for the synthesis of mitochondrial genome-encoded proteins, including at least some of the essential transmembrane subunits of the mitochondrial respiratory chain. The mitoribosomes are attached to the mitochondrial inner membrane and translation products are cotranslationally integrated into the membrane. This Saccharomyces cerevisiae (strain ATCC 204508 / S288c) (Baker's yeast) protein is Large ribosomal subunit protein uL14m (MRPL38).